Here is a 222-residue protein sequence, read N- to C-terminus: Phosphoenolpyruvate guanylyltransferase (222 aa).

Phosphoenolpyruvate contacts are provided by T147, G163, and S166.

This sequence belongs to the CofC family.

The catalysed reaction is phosphoenolpyruvate + GTP + H(+) = enolpyruvoyl-2-diphospho-5'-guanosine + diphosphate. Its pathway is cofactor biosynthesis; coenzyme F420 biosynthesis. In terms of biological role, guanylyltransferase that catalyzes the activation of phosphoenolpyruvate (PEP) as enolpyruvoyl-2-diphospho-5'-guanosine, via the condensation of PEP with GTP. It is involved in the biosynthesis of coenzyme F420, a hydride carrier cofactor. In Streptosporangium roseum (strain ATCC 12428 / DSM 43021 / JCM 3005 / KCTC 9067 / NCIMB 10171 / NRRL 2505 / NI 9100), this protein is Phosphoenolpyruvate guanylyltransferase.